The chain runs to 327 residues: MILSIESSCDDTSLAVMEIDSKKLLFHKKISQEIEHSVYGGVVPELASRLHAKALPKILEETKEYFPNLKAVAVTNAPGLSVTLQEGVMMAKALSIALNIPLIGVNHLVGHIYSLFIEKEEIKPMMVLLVSGGHTKILNFNGIESVCEIATTMDDSFGESFDKVAKMLGLGYPGGPVIENLAKKGSDIVPLPLPLRNSPEIAFSYSGIKNAVRLAIESGKYKPEDIAASFQNKAIEHLTFMCKRAIKKHKPENFAIVGGASANLKLREEFEKLSQKFGFKLLYPEMKFTSDNAAMIARAAVEMYKKGMFLNYKDIKIIPRVDFDKCH.

Fe cation is bound by residues histidine 107 and histidine 111. Residues 129-133 (LVSGG), aspartate 162, glycine 175, and asparagine 263 each bind substrate. Aspartate 291 lines the Fe cation pocket.

Belongs to the KAE1 / TsaD family. The cofactor is Fe(2+).

The protein resides in the cytoplasm. It carries out the reaction L-threonylcarbamoyladenylate + adenosine(37) in tRNA = N(6)-L-threonylcarbamoyladenosine(37) in tRNA + AMP + H(+). Functionally, required for the formation of a threonylcarbamoyl group on adenosine at position 37 (t(6)A37) in tRNAs that read codons beginning with adenine. Is involved in the transfer of the threonylcarbamoyl moiety of threonylcarbamoyl-AMP (TC-AMP) to the N6 group of A37, together with TsaE and TsaB. TsaD likely plays a direct catalytic role in this reaction. The polypeptide is tRNA N6-adenosine threonylcarbamoyltransferase (Nautilia profundicola (strain ATCC BAA-1463 / DSM 18972 / AmH)).